Here is a 305-residue protein sequence, read N- to C-terminus: NADH-ubiquinone oxidoreductase chain 1 (305 aa).

Transmembrane regions (helical) follow at residues 1-21 (MWVLINLLILMIMVLISVAFL), 75-95 (MLMFFLSLVMWILYPWFGFMY), 101-121 (ILFMLLVLGLSVYPVLFVGWI), 134-154 (LVSTMISFEINLFFLVFSLMM), 173-193 (FAILLYPLYLMMFTSMLIELN), 219-239 (FVLIFLSEYMNIMFMSVILSL), 249-269 (IKFILIYLFHICLIIWIRGIL), and 285-305 (MLMLVMIYLMYLYFMKEFLCI).

This sequence belongs to the complex I subunit 1 family.

It localises to the mitochondrion inner membrane. It catalyses the reaction a ubiquinone + NADH + 5 H(+)(in) = a ubiquinol + NAD(+) + 4 H(+)(out). Functionally, core subunit of the mitochondrial membrane respiratory chain NADH dehydrogenase (Complex I) that is believed to belong to the minimal assembly required for catalysis. Complex I functions in the transfer of electrons from NADH to the respiratory chain. The immediate electron acceptor for the enzyme is believed to be ubiquinone. The sequence is that of NADH-ubiquinone oxidoreductase chain 1 (ND1) from Apis mellifera ligustica (Common honeybee).